The sequence spans 734 residues: Ribosome-releasing factor 2, mitochondrial (734 aa).

The N-terminal 25 residues, 1-25 (MLQYCLLRRYRFLLRQHAQVIKRCY), are a transit peptide targeting the mitochondrion. Residues 27–303 (GDIRNIGILA…AVNAYLPMPE (277 aa)) form the tr-type G domain. GTP is bound by residues 36-43 (AHIDAGKT), 100-104 (DTPGH), and 154-157 (NKMD).

It belongs to the TRAFAC class translation factor GTPase superfamily. Classic translation factor GTPase family. EF-G/EF-2 subfamily.

It is found in the mitochondrion. Functionally, mitochondrial GTPase that mediates the disassembly of ribosomes from messenger RNA at the termination of mitochondrial protein biosynthesis. Not involved in the GTP-dependent ribosomal translocation step during translation elongation. This is Ribosome-releasing factor 2, mitochondrial from Drosophila grimshawi (Hawaiian fruit fly).